Here is a 395-residue protein sequence, read N- to C-terminus: Putative 8-amino-7-oxononanoate synthase (395 aa).

Position 23 (Arg23) interacts with substrate. 110–111 (GY) is a binding site for pyridoxal 5'-phosphate. His135 is a substrate binding site. Pyridoxal 5'-phosphate is bound by residues Ser182, 207–210 (DEAH), and 239–242 (TFSK). Position 242 is an N6-(pyridoxal phosphate)lysine (Lys242). Thr356 provides a ligand contact to substrate.

The protein belongs to the class-II pyridoxal-phosphate-dependent aminotransferase family. BioF subfamily. Homodimer. Pyridoxal 5'-phosphate serves as cofactor.

It catalyses the reaction 6-carboxyhexanoyl-[ACP] + L-alanine + H(+) = (8S)-8-amino-7-oxononanoate + holo-[ACP] + CO2. The protein operates within cofactor biosynthesis; biotin biosynthesis. Its function is as follows. Catalyzes the decarboxylative condensation of pimeloyl-[acyl-carrier protein] and L-alanine to produce 8-amino-7-oxononanoate (AON), [acyl-carrier protein], and carbon dioxide. In Bacillus cereus (strain ZK / E33L), this protein is Putative 8-amino-7-oxononanoate synthase (bioF).